Consider the following 693-residue polypeptide: MAREFSLEKTRNIGIMAHVDAGKTTTTERILYYTGKIHKIGETHEGASQMDWMEQEQERGITITSAATTAQWNNHRVNIIDTPGHVDFTIEVQRSLRVLDGAVTVLDSQSGVEPQTETVWRQATEYGVPRIVFANKMDKIGADFLYSVSTLHDRLQANAHPIQLPIGAEDDFRGIIDLIKMKAEIYTNDLGTDILEEDIPAEYLEQAQEYREKLVEAVAETDEDLMMKYLEGEEITNEELKAGIRKATINVEFFPVLCGSAFKNKGVQLMLDAVIDYLPSPLDIPAIKGINPDTDEEETRPASDEEPFAALAFKIMTDPFVGRLTFFRVYSGVLQSGSYVLNTSKGKRERIGRILQMHANSRQEIETVYAGDIAAAVGLKDTTTGDSLTDEKAKIILESINVPEPVIQLMVEPKSKADQDKMGVALQKLAEEDPTFRVETNVETGETVISGMGELHLDVLVDRMRREFKVEANVGAPQVSYRETFRASTQARGFFKRQSGGKGQFGDVWIEFTPNEEGKGFEFENAIVGGVVPREFIPAVEKGLVESMANGVLAGYPIVDVKAKLYDGSYHDVDSSETAFKVAASLALKEAAKTAQPAILEPMMLVTITVPEENLGDVMGHVTARRGRVDGMEAHGNSQIVRAYVPLAEMFGYATVLRSASQGRGTFMMVFDHYEDVPKSVQEEIIKKHKGEA.

The tr-type G domain maps to 8–282; that stretch reads EKTRNIGIMA…AVIDYLPSPL (275 aa). Residues 17–24, 81–85, and 135–138 each bind GTP; these read AHVDAGKT, DTPGH, and NKMD.

The protein belongs to the TRAFAC class translation factor GTPase superfamily. Classic translation factor GTPase family. EF-G/EF-2 subfamily.

The protein localises to the cytoplasm. Catalyzes the GTP-dependent ribosomal translocation step during translation elongation. During this step, the ribosome changes from the pre-translocational (PRE) to the post-translocational (POST) state as the newly formed A-site-bound peptidyl-tRNA and P-site-bound deacylated tRNA move to the P and E sites, respectively. Catalyzes the coordinated movement of the two tRNA molecules, the mRNA and conformational changes in the ribosome. This chain is Elongation factor G, found in Streptococcus gordonii (strain Challis / ATCC 35105 / BCRC 15272 / CH1 / DL1 / V288).